Reading from the N-terminus, the 166-residue chain is Spiderine-1a (166 aa).

A signal peptide spans 1 to 18 (MKFALVLLGVCAFYLVNA). Positions 19–58 (TGDLETELEASELQELQEALDLIGETPLESLEAEELEEAR) are excised as a propeptide. Residues 59–99 (KFKWGKLFSTAKKLYKKGKKLSKNKNFKKALKFGKQLAKNL) form a linear cationic cytotoxin domain region. An Oxytoxin-type inhibitor cystine knot (ICK) domain is found at 113–166 (NNKCWAIGTTCSDDCDCCPEHHCHCPAGKWLPGLFRCTCQVTESDKVNKCPPAE). Cystine bridges form between Cys-116–Cys-130, Cys-123–Cys-135, Cys-127–Cys-162, Cys-129–Cys-151, and Cys-137–Cys-149.

The protein belongs to the spiderine family. Cationic/spiderine subfamily. As to expression, expressed by the venom gland.

The protein resides in the secreted. Functionally, has antimicrobial, insecticidal, cytolytic and cytotoxic activity. Active against E.coli DH5alpha, E.faecalis VKM B 871, B.subtilis VKM B 501, A.globiformis VKM Ac 1112, P.aeruginosa PAO1 and S.aureus 209P in submicromolar or low micromolar ranges. Lyses human erythrocytes. Kills HeLA and A549 cells. In Oxyopes takobius (Lynx spider), this protein is Spiderine-1a.